Here is a 107-residue protein sequence, read N- to C-terminus: U1-lycotoxin-Ls1p (107 aa).

A signal peptide spans 1-20 (MMKVLVVVALLVTLISYSSS). Residues 21 to 41 (EGIDDLEADELLSLMANEQTR) constitute a propeptide that is removed on maturation. 4 cysteine pairs are disulfide-bonded: Cys-44-Cys-59, Cys-51-Cys-68, Cys-58-Cys-86, and Cys-70-Cys-84.

This sequence belongs to the neurotoxin 19 (CSTX) family. 04 (U1-Lctx) subfamily. In terms of tissue distribution, expressed by the venom gland.

The protein localises to the secreted. This chain is U1-lycotoxin-Ls1p, found in Lycosa singoriensis (Wolf spider).